Consider the following 329-residue polypeptide: tRNA dimethylallyltransferase (329 aa).

Residue 12-19 (GPTSVGKT) participates in ATP binding. 14–19 (TSVGKT) lines the substrate pocket. The interval 37–40 (DSRY) is interaction with substrate tRNA. The segment at 306-329 (LREESDEGDVAVHQSGGGKEAPRA) is disordered. Residues 320–329 (SGGGKEAPRA) are compositionally biased toward gly residues.

This sequence belongs to the IPP transferase family. In terms of assembly, monomer. Mg(2+) is required as a cofactor.

The catalysed reaction is adenosine(37) in tRNA + dimethylallyl diphosphate = N(6)-dimethylallyladenosine(37) in tRNA + diphosphate. Functionally, catalyzes the transfer of a dimethylallyl group onto the adenine at position 37 in tRNAs that read codons beginning with uridine, leading to the formation of N6-(dimethylallyl)adenosine (i(6)A). In Thermomicrobium roseum (strain ATCC 27502 / DSM 5159 / P-2), this protein is tRNA dimethylallyltransferase.